We begin with the raw amino-acid sequence, 144 residues long: Large ribosomal subunit protein uL15 (144 aa).

Residues 1 to 60 (MRLNSLRPAAGSRPDANRVGRGAGTGNGKTAGRGHKGQHSRSGGFTKVGFEGGQMPLQRR) are disordered. Residues 21 to 31 (RGAGTGNGKTA) show a composition bias toward gly residues.

Belongs to the universal ribosomal protein uL15 family. Part of the 50S ribosomal subunit.

Its function is as follows. Binds to the 23S rRNA. This chain is Large ribosomal subunit protein uL15, found in Alkalilimnicola ehrlichii (strain ATCC BAA-1101 / DSM 17681 / MLHE-1).